The following is a 272-amino-acid chain: Putative pyruvate, phosphate dikinase regulatory protein (272 aa).

ADP is bound at residue 151 to 158; the sequence is GISRTSKT.

Belongs to the pyruvate, phosphate/water dikinase regulatory protein family. PDRP subfamily.

It carries out the reaction N(tele)-phospho-L-histidyl/L-threonyl-[pyruvate, phosphate dikinase] + ADP = N(tele)-phospho-L-histidyl/O-phospho-L-threonyl-[pyruvate, phosphate dikinase] + AMP + H(+). It catalyses the reaction N(tele)-phospho-L-histidyl/O-phospho-L-threonyl-[pyruvate, phosphate dikinase] + phosphate + H(+) = N(tele)-phospho-L-histidyl/L-threonyl-[pyruvate, phosphate dikinase] + diphosphate. Functionally, bifunctional serine/threonine kinase and phosphorylase involved in the regulation of the pyruvate, phosphate dikinase (PPDK) by catalyzing its phosphorylation/dephosphorylation. The sequence is that of Putative pyruvate, phosphate dikinase regulatory protein from Staphylococcus aureus (strain USA300).